Consider the following 351-residue polypeptide: S-adenosylmethionine:tRNA ribosyltransferase-isomerase (351 aa).

The protein belongs to the QueA family. As to quaternary structure, monomer.

Its subcellular location is the cytoplasm. It carries out the reaction 7-aminomethyl-7-carbaguanosine(34) in tRNA + S-adenosyl-L-methionine = epoxyqueuosine(34) in tRNA + adenine + L-methionine + 2 H(+). The protein operates within tRNA modification; tRNA-queuosine biosynthesis. Transfers and isomerizes the ribose moiety from AdoMet to the 7-aminomethyl group of 7-deazaguanine (preQ1-tRNA) to give epoxyqueuosine (oQ-tRNA). This Hydrogenovibrio crunogenus (strain DSM 25203 / XCL-2) (Thiomicrospira crunogena) protein is S-adenosylmethionine:tRNA ribosyltransferase-isomerase.